A 126-amino-acid polypeptide reads, in one-letter code: Histone H2B type 1-K (126 aa).

The segment covering 1–12 (MPEPAKSAPAPK) has biased composition (low complexity). A disordered region spans residues 1 to 36 (MPEPAKSAPAPKKGSKKAVTKAQKKDGKKRKRSRKE). At Pro2 the chain carries N-acetylproline. Glu3 is modified (ADP-ribosyl glutamic acid). Lys6 is modified (N6-(2-hydroxyisobutyryl)lysine; alternate). Lys6 bears the N6-(beta-hydroxybutyryl)lysine; alternate mark. Residue Lys6 is modified to N6-acetyllysine; alternate. Lys6 is modified (N6-butyryllysine; alternate). Residue Lys6 is modified to N6-crotonyllysine; alternate. The residue at position 6 (Lys6) is an N6-lactoyllysine; alternate. A Glycyl lysine isopeptide (Lys-Gly) (interchain with G-Cter in SUMO2); alternate cross-link involves residue Lys6. ADP-ribosylserine is present on Ser7. The residue at position 12 (Lys12) is an N6-(beta-hydroxybutyryl)lysine; alternate. N6-acetyllysine; alternate is present on residues Lys12 and Lys13. N6-crotonyllysine; alternate is present on residues Lys12 and Lys13. Lys12 is subject to N6-lactoyllysine; alternate. At Lys13 the chain carries N6-(2-hydroxyisobutyryl)lysine; alternate. Phosphoserine; by STK4/MST1 is present on Ser15. N6-acetyllysine; alternate is present on residues Lys16, Lys17, Lys21, and Lys24. An N6-crotonyllysine; alternate mark is found at Lys16, Lys17, Lys21, and Lys24. N6-lactoyllysine; alternate occurs at positions 16, 17, 21, and 24. 2 positions are modified to N6-(beta-hydroxybutyryl)lysine; alternate: Lys17 and Lys21. The residue at position 17 (Lys17) is an N6-glutaryllysine; alternate. Lys21 and Lys24 each carry N6-(2-hydroxyisobutyryl)lysine; alternate. N6-butyryllysine; alternate is present on Lys21. Residue Lys21 forms a Glycyl lysine isopeptide (Lys-Gly) (interchain with G-Cter in SUMO2); alternate linkage. Lys25 bears the N6-(2-hydroxyisobutyryl)lysine mark. The residue at position 35 (Lys35) is an N6-(2-hydroxyisobutyryl)lysine; alternate. The residue at position 35 (Lys35) is an N6-(beta-hydroxybutyryl)lysine; alternate. Lys35 carries the N6-crotonyllysine; alternate modification. Residue Lys35 is modified to N6-glutaryllysine; alternate. Lys35 carries the N6-succinyllysine; alternate modification. Lys35 participates in a covalent cross-link: Glycyl lysine isopeptide (Lys-Gly) (interchain with G-Cter in ubiquitin); alternate. Glu36 carries the polyADP-ribosyl glutamic acid modification. A Phosphoserine; by AMPK modification is found at Ser37. 3 positions are modified to N6-(2-hydroxyisobutyryl)lysine; alternate: Lys44, Lys47, and Lys58. The residue at position 44 (Lys44) is an N6-lactoyllysine; alternate. An N6-glutaryllysine; alternate mark is found at Lys44 and Lys47. An N6-methyllysine; alternate modification is found at Lys47. N6,N6-dimethyllysine; alternate is present on Lys58. Arg80 bears the Dimethylated arginine mark. Lys86 carries the N6-(2-hydroxyisobutyryl)lysine; alternate modification. N6-(beta-hydroxybutyryl)lysine; alternate is present on Lys86. At Lys86 the chain carries N6-acetyllysine; alternate. Residue Lys86 is modified to N6-lactoyllysine; alternate. At Lys86 the chain carries N6,N6,N6-trimethyllysine; alternate. An omega-N-methylarginine mark is found at Arg87 and Arg93. Residue Lys109 is modified to N6-(2-hydroxyisobutyryl)lysine; alternate. Lys109 is modified (N6-lactoyllysine; alternate). Lys109 bears the N6-glutaryllysine; alternate mark. N6-methyllysine; alternate is present on Lys109. O-linked (GlcNAc) serine glycosylation is present at Ser113. Thr116 bears the Phosphothreonine mark. N6-(2-hydroxyisobutyryl)lysine; alternate is present on residues Lys117 and Lys121. 2 positions are modified to N6-(beta-hydroxybutyryl)lysine; alternate: Lys117 and Lys121. An N6-lactoyllysine; alternate mark is found at Lys117 and Lys121. N6-glutaryllysine; alternate occurs at positions 117 and 121. 2 positions are modified to N6-succinyllysine; alternate: Lys117 and Lys121. Lys117 carries the N6-malonyllysine; alternate modification. Lys117 carries the post-translational modification N6-methylated lysine; alternate. Lys121 participates in a covalent cross-link: Glycyl lysine isopeptide (Lys-Gly) (interchain with G-Cter in ubiquitin); alternate.

It belongs to the histone H2B family. In terms of assembly, the nucleosome is a histone octamer containing two molecules each of H2A, H2B, H3 and H4 assembled in one H3-H4 heterotetramer and two H2A-H2B heterodimers. The octamer wraps approximately 147 bp of DNA. Post-translationally, monoubiquitination at Lys-35 (H2BK34Ub) by the MSL1/MSL2 dimer is required for histone H3 'Lys-4' (H3K4me) and 'Lys-79' (H3K79me) methylation and transcription activation at specific gene loci, such as HOXA9 and MEIS1 loci. Similarly, monoubiquitination at Lys-121 (H2BK120Ub) by the RNF20/40 complex gives a specific tag for epigenetic transcriptional activation and is also prerequisite for histone H3 'Lys-4' and 'Lys-79' methylation. It also functions cooperatively with the FACT dimer to stimulate elongation by RNA polymerase II. H2BK120Ub also acts as a regulator of mRNA splicing: deubiquitination by USP49 is required for efficient cotranscriptional splicing of a large set of exons. In terms of processing, phosphorylation at Ser-37 (H2BS36ph) by AMPK in response to stress promotes transcription. Phosphorylated on Ser-15 (H2BS14ph) by STK4/MST1 during apoptosis; which facilitates apoptotic chromatin condensation. Also phosphorylated on Ser-15 in response to DNA double strand breaks (DSBs), and in correlation with somatic hypermutation and immunoglobulin class-switch recombination. GlcNAcylation at Ser-113 promotes monoubiquitination of Lys-121. It fluctuates in response to extracellular glucose, and associates with transcribed genes. Post-translationally, ADP-ribosylated by PARP1 or PARP2 on Ser-7 (H2BS6ADPr) in response to DNA damage. H2BS6ADPr promotes recruitment of CHD1L. Mono-ADP-ribosylated on Glu-3 (H2BE2ADPr) by PARP3 in response to single-strand breaks. Poly ADP-ribosylation on Glu-36 (H2BE35ADPr) by PARP1 regulates adipogenesis: it inhibits phosphorylation at Ser-37 (H2BS36ph), thereby blocking expression of pro-adipogenetic genes. In terms of processing, crotonylation (Kcr) is specifically present in male germ cells and marks testis-specific genes in post-meiotic cells, including X-linked genes that escape sex chromosome inactivation in haploid cells. Crotonylation marks active promoters and enhancers and confers resistance to transcriptional repressors. It is also associated with post-meiotically activated genes on autosomes. Lactylated in macrophages by EP300/P300 by using lactoyl-CoA directly derived from endogenous or exogenous lactate, leading to stimulates gene transcription.

The protein localises to the nucleus. It localises to the chromosome. Core component of nucleosome. Nucleosomes wrap and compact DNA into chromatin, limiting DNA accessibility to the cellular machineries which require DNA as a template. Histones thereby play a central role in transcription regulation, DNA repair, DNA replication and chromosomal stability. DNA accessibility is regulated via a complex set of post-translational modifications of histones, also called histone code, and nucleosome remodeling. Functionally, has broad antibacterial activity. May contribute to the formation of the functional antimicrobial barrier of the colonic epithelium, and to the bactericidal activity of amniotic fluid. The polypeptide is Histone H2B type 1-K (Homo sapiens (Human)).